Here is a 513-residue protein sequence, read N- to C-terminus: uncharacterized protein (513 aa).

The HDOD domain occupies 254-447 (IPQLPSKLLE…INTIRFHHNL (194 aa)).

This is an uncharacterized protein from Treponema pallidum (strain Nichols).